Consider the following 147-residue polypeptide: Large ribosomal subunit protein bL9 (147 aa).

Belongs to the bacterial ribosomal protein bL9 family.

Binds to the 23S rRNA. This chain is Large ribosomal subunit protein bL9, found in Clostridium kluyveri (strain NBRC 12016).